A 233-amino-acid polypeptide reads, in one-letter code: Counting factor-associated protein A (233 aa).

Residues 1 to 21 (MKLLNSLILLVLTCLVSSINT) form the signal peptide. Asn-37 and Asn-189 each carry an N-linked (GlcNAc...) asparagine glycan.

It is found in the secreted. The sequence is that of Counting factor-associated protein A (cfaA) from Dictyostelium discoideum (Social amoeba).